The chain runs to 489 residues: Monocarboxylate transporter 2 (489 aa).

The Cytoplasmic segment spans residues 1–21; sequence MPSESSVKATAAPPPFPLPPD. The chain crosses the membrane as a helical span at residues 22 to 42; the sequence is GGWGWVVVCASFISIGFSYAF. Residues 43-65 are Extracellular-facing; that stretch reads PKAVTVFFNDIKDIFKTTSSQIA. Residues 66-86 form a helical membrane-spanning segment; sequence WISSIMLAVMYAGGPISSVLV. The Cytoplasmic portion of the chain corresponds to 87–95; that stretch reads NNYGSRPVV. Residues 96-116 traverse the membrane as a helical segment; that stretch reads IVGGLLCCTGMILASFSSSVI. The Extracellular segment spans residues 117-121; it reads ELYLT. Residues 122–142 form a helical membrane-spanning segment; it reads VGFIGGLGLAFNLQPALTIIG. Residues 143-154 are Cytoplasmic-facing; that stretch reads KYFYRKRPLANG. Residues 155-175 traverse the membrane as a helical segment; the sequence is FAMAGSPVFLSTLAPFNQFLF. The Extracellular portion of the chain corresponds to 176 to 179; that stretch reads NSYG. The chain crosses the membrane as a helical span at residues 180 to 200; it reads WKGSFLILGAIFLHSCVAGCL. Residues 201-250 are Cytoplasmic-facing; sequence MRPVGPSPRAAKSKSKVGSRQDSSTKRLSKVSTAEKINRFLDFGLFTHRG. The disordered stretch occupies residues 206–227; the sequence is PSPRAAKSKSKVGSRQDSSTKR. Residues 251-271 traverse the membrane as a helical segment; the sequence is FLIYLSGNVVLFLGMFAPIIF. The Extracellular portion of the chain corresponds to 272-286; it reads LAPYAKDKGVDDYNS. A helical membrane pass occupies residues 287 to 307; it reads AFLLSVMAFTDMFARPSVGLI. Topologically, residues 308 to 316 are cytoplasmic; sequence ANTSLIRPR. The chain crosses the membrane as a helical span at residues 317 to 337; it reads IQYLFSVAIMFTGICHLLCPL. Topologically, residues 338–342 are extracellular; sequence AHSYT. Residues 343 to 363 form a helical membrane-spanning segment; that stretch reads ALVVYVIFFGIGFGSISSLLF. Topologically, residues 364–377 are cytoplasmic; that stretch reads ECLMDQVGASRFSS. A helical transmembrane segment spans residues 378 to 398; sequence AVGLVTIVECCPVLFGPPLAG. The Extracellular portion of the chain corresponds to 399–410; it reads KLLDITGQYKYL. A helical membrane pass occupies residues 411-431; it reads YIASGIVVLSSGIYLLICNAI. Residues 432–489 are Cytoplasmic-facing; that stretch reads NYRLLEKERKREKARRKKSASQASKEMEALSRSKQDDVTVKVSNTHNPPSDRDKESSI. The tract at residues 441–489 is disordered; the sequence is KREKARRKKSASQASKEMEALSRSKQDDVTVKVSNTHNPPSDRDKESSI. 2 stretches are compositionally biased toward basic and acidic residues: residues 456 to 470 and 480 to 489; these read KEME…DDVT and PSDRDKESSI.

It belongs to the major facilitator superfamily. Monocarboxylate porter (TC 2.A.1.13) family. Homodimer. Interacts with GRID2IP. Interacts with EMB; interaction mediates SLC16A7 targeting to the plasma membrane. Interacts with isoform 2 of BSG. In terms of tissue distribution, detected in brain and kidney (at protein level).

The protein resides in the cell membrane. The protein localises to the basolateral cell membrane. It is found in the cytoplasm. The enzyme catalyses 3-methyl-2-oxobutanoate(out) + H(+)(out) = 3-methyl-2-oxobutanoate(in) + H(+)(in). It carries out the reaction (S)-lactate(in) + H(+)(in) = (S)-lactate(out) + H(+)(out). It catalyses the reaction acetoacetate(out) + H(+)(out) = acetoacetate(in) + H(+)(in). The catalysed reaction is (R)-3-hydroxybutanoate(out) + H(+)(out) = (R)-3-hydroxybutanoate(in) + H(+)(in). The enzyme catalyses 4-methyl-2-oxopentanoate(out) + H(+)(out) = 4-methyl-2-oxopentanoate(in) + H(+)(in). It carries out the reaction pyruvate(out) + H(+)(out) = pyruvate(in) + H(+)(in). It catalyses the reaction (S)-3-hydroxybutanoate(out) + H(+)(out) = (S)-3-hydroxybutanoate(in) + H(+)(in). Transport activity exhibits steep dependence on substrate concentration. Substrate concentration sensitivity of SLC16A7 arises from the strong inter-subunit cooperativity of the SLC16A7 dimer during transport. Inhibited by AR-C155858. Proton-coupled monocarboxylate symporter. Catalyzes the rapid transport across the plasma membrane of monocarboxylates such as L-lactate, pyruvate and ketone bodies, acetoacetate, beta-hydroxybutyrate and acetate. Dimerization is functionally required and both subunits work cooperatively in transporting substrate. The sequence is that of Monocarboxylate transporter 2 (Slc16a7) from Rattus norvegicus (Rat).